Consider the following 639-residue polypeptide: Bucky ball (639 aa).

Over residues 178-187 (ATKECKEDPV) the composition is skewed to basic and acidic residues. Disordered regions lie at residues 178-205 (ATKE…SSQG), 218-242 (LDSS…EPQT), and 581-614 (RSWR…RSEY). Residues 189–205 (RPTTYSDSAYDAESSQG) show a composition bias toward polar residues. The span at 225–240 (EEEEEEEKDVNEEDEP) shows a compositional bias: acidic residues. A compositionally biased stretch (polar residues) spans 584 to 593 (RQVTGPQDQG). The segment covering 596–609 (PLRRSTCKSIHQQR) has biased composition (basic residues). Residues arginine 627 and arginine 629 each carry the symmetric dimethylarginine modification. 3 consecutive short sequence motifs (RG Motif) follow at residues 627 to 628 (RG), 629 to 630 (RG), and 635 to 636 (RG).

In terms of assembly, specifically interacts (when methylated) with tdrd6 (via Tudor domain); interaction is responsible for recruitment of different protein complexes to germ plasm. Interacts with rbpms2 and dazl; interaction mediates Balbiani body formation. Interacts with kif5ba; interaction leads to buc enrichment at the embryonic cleavage furrows and mediates dorsoventral patterning. In terms of processing, symmetric dimethylarginine modification promotes interaction with tdrd6.

Its subcellular location is the cytoplasm. It localises to the cleavage furrow. In terms of biological role, prion-like protein required for the formation of Balbiani body (electron-dense aggregates in the oocyte) and germ plasm assembly, and for the establishment of oocyte polarity during early oogenesis. Mobility and aggregation properties are improved by tudor domain-containing protein tdrd6 through interaction with dimethylated arginines Tri-RG domains. Establishes oocyte polarity through interactions with RNA-binding proteins rbpms2 and dazl, initiating a positive feedback loop amplification mechanism in the Balbiani body. Interaction of BUC protein and mRNA with rbpms2 and dazl is required to mediate Balbiani body formation. Involved in recruitment of germ plasm to embryonic cleavage furrows and dorsoventral patterning through interaction with Kinesin-1/KIF5BA. The sequence is that of Bucky ball from Danio rerio (Zebrafish).